A 415-amino-acid polypeptide reads, in one-letter code: Gamma-glutamyl phosphate reductase (415 aa).

Belongs to the gamma-glutamyl phosphate reductase family.

The protein localises to the cytoplasm. It catalyses the reaction L-glutamate 5-semialdehyde + phosphate + NADP(+) = L-glutamyl 5-phosphate + NADPH + H(+). Its pathway is amino-acid biosynthesis; L-proline biosynthesis; L-glutamate 5-semialdehyde from L-glutamate: step 2/2. Catalyzes the NADPH-dependent reduction of L-glutamate 5-phosphate into L-glutamate 5-semialdehyde and phosphate. The product spontaneously undergoes cyclization to form 1-pyrroline-5-carboxylate. The protein is Gamma-glutamyl phosphate reductase of Bacillus thuringiensis subsp. konkukian (strain 97-27).